The primary structure comprises 48 residues: uncharacterized protein (48 aa).

The tract at residues 1–20 (MLLKNWPSRRIQRDKSKRAG) is disordered.

This is an uncharacterized protein from Bacillus subtilis (strain 168).